The following is a 96-amino-acid chain: ATP-dependent Clp protease adapter protein ClpS (96 aa).

It belongs to the ClpS family. Binds to the N-terminal domain of the chaperone ClpA.

In terms of biological role, involved in the modulation of the specificity of the ClpAP-mediated ATP-dependent protein degradation. The chain is ATP-dependent Clp protease adapter protein ClpS from Campylobacter jejuni subsp. doylei (strain ATCC BAA-1458 / RM4099 / 269.97).